Reading from the N-terminus, the 953-residue chain is MEESSSVAMLVPDIGEQEAILTAESIISPSLEIDEQRKTKPDPLIHVIQKLSKIVENEKSQKCLLIGKKRPRSSAATHSLETQELCEIPAKVIQSPAADTRRAEMSQTNFTPDTLAQNEGKAMSYQCSLCKFLSSSFSVLKDHIKQHGQQNEVILMCSECHITSRSQEELEAHVVNDHDNDANIHTQSKAQQCVSPSSSLCRKTTERNETIPDIPVSVDNLQTHTVQTASVAEMGRRKWYAYEQYGMYRCLFCSYTCGQQRMLKTHAWKHAGEVDCSYPIFENENEPLGLLDSSAAAAPGGVDAVVIAIGESELSIHNGPSVQVQICSSEQLSSSSPLEQSAERGVHLSQSVTLDPNEEEMLEVISDAEENLIPDSLLTSAQKIISSSPNKKGHVNVIVERLPSAEETLSQKRFLMNTEMEEGKDLSLTEAQIGREGMDDVYRADKCTVDIGGLIIGWSSSEKKDELMNKGLATDENAPPGRRRTNSESLRLHSLAAEALVTMPIRAAELTRANLGHYGDINLLDPDTSQRQVDSTLAAYSKMMSPLKNSSDGLTSLNQSNSTLVALPEGRQELSDGQVKTGISMSLLTVIEKLRERTDQNASDDDILKELQDNAQCQPNSDTSLSGNNVVEYIPNAERPYRCRLCHYTSGNKGYIKQHLRVHRQRQPYQCPICEHIADNSKDLESHMIHHCKTRIYQCKQCEESFHYKSQLRNHEREQHSLPDTLSIATSNEPRISSDTADGKCVQEGNKSSVQKQYRCDVCDYTSTTYVGVRNHRRIHNSDKPYRCSLCGYVCSHPPSLKSHMWKHASDQNYNYEQVNKAINDAISQSGRVLGKSPGKTQLKSSEESADPVTGSSENAVSSSELMSQTPSEVLGTNENEKLSPTSNTSYSLEKISSLAPPSMEYCVLLFCCCICGFESTSKENLLDHMKEHEGEIVNIILNKDHNTALNTN.

Ser-95 is subject to Phosphoserine. C2H2-type zinc fingers lie at residues 125–147 (YQCSLCKFLSSSFSVLKDHIKQH), 155–185 (LMCSECHITSRSQEELEAHVVNDHDNDANIH), and 248–270 (YRCLFCSYTCGQQRMLKTHAWKH). Ser-427 carries the phosphoserine modification. Residues 470-489 (KGLATDENAPPGRRRTNSES) are disordered. C2H2-type zinc fingers lie at residues 641–663 (YRCRLCHYTSGNKGYIKQHLRVH), 669–691 (YQCPICEHIADNSKDLESHMIHH), 697–720 (YQCKQCEESFHYKSQLRNHEREQH), 758–780 (YRCDVCDYTSTTYVGVRNHRRIH), and 786–808 (YRCSLCGYVCSHPPSLKSHMWKH). The tract at residues 831–888 (GRVLGKSPGKTQLKSSEESADPVTGSSENAVSSSELMSQTPSEVLGTNENEKLSPTSN) is disordered. Residues 854–888 (TGSSENAVSSSELMSQTPSEVLGTNENEKLSPTSN) show a composition bias toward polar residues. The segment at 911–933 (FCCCICGFESTSKENLLDHMKEH) adopts a C2H2-type 9 zinc-finger fold.

The protein belongs to the krueppel C2H2-type zinc-finger protein family.

The protein localises to the nucleus. Functionally, may be involved in transcriptional regulation. The polypeptide is Zinc finger protein 507 (ZNF507) (Homo sapiens (Human)).